A 151-amino-acid chain; its full sequence is Large ribosomal subunit protein uL15 (151 aa).

It belongs to the universal ribosomal protein uL15 family. As to quaternary structure, part of the 50S ribosomal subunit.

Functionally, binds to the 23S rRNA. The protein is Large ribosomal subunit protein uL15 of Hyperthermus butylicus (strain DSM 5456 / JCM 9403 / PLM1-5).